The sequence spans 241 residues: 3-oxoacyl-[acyl-carrier-protein] reductase FabG (241 aa).

NADP(+)-binding positions include 13–16, serine 38, 57–58, and asparagine 83; these read GASG and EV. Residue serine 135 coordinates substrate. The active-site Proton acceptor is the tyrosine 148. NADP(+)-binding positions include 148–152 and isoleucine 181; that span reads YCASK.

This sequence belongs to the short-chain dehydrogenases/reductases (SDR) family. In terms of assembly, homotetramer.

It carries out the reaction a (3R)-hydroxyacyl-[ACP] + NADP(+) = a 3-oxoacyl-[ACP] + NADPH + H(+). Its pathway is lipid metabolism; fatty acid biosynthesis. Its function is as follows. Catalyzes the NADPH-dependent reduction of beta-ketoacyl-ACP substrates to beta-hydroxyacyl-ACP products, the first reductive step in the elongation cycle of fatty acid biosynthesis. The protein is 3-oxoacyl-[acyl-carrier-protein] reductase FabG (fabG) of Rickettsia typhi (strain ATCC VR-144 / Wilmington).